Here is a 404-residue protein sequence, read N- to C-terminus: CinA-like protein (404 aa).

It belongs to the CinA family.

This is CinA-like protein from Deinococcus radiodurans (strain ATCC 13939 / DSM 20539 / JCM 16871 / CCUG 27074 / LMG 4051 / NBRC 15346 / NCIMB 9279 / VKM B-1422 / R1).